Consider the following 192-residue polypeptide: Ion-translocating oxidoreductase complex subunit A (192 aa).

The next 6 membrane-spanning stretches (helical) occupy residues 5-25, 38-58, 72-92, 102-122, 134-154, and 171-191; these read LLLL…FLGL, AIGM…LSFL, LRTM…EMLV, ALGI…VALL, AIYG…FSAM, and AIAM…AGLI.

The protein belongs to the NqrDE/RnfAE family. In terms of assembly, the complex is composed of six subunits: RnfA, RnfB, RnfC, RnfD, RnfE and RnfG.

Its subcellular location is the cell inner membrane. Its function is as follows. Part of a membrane-bound complex that couples electron transfer with translocation of ions across the membrane. The protein is Ion-translocating oxidoreductase complex subunit A of Shewanella denitrificans (strain OS217 / ATCC BAA-1090 / DSM 15013).